The primary structure comprises 1846 residues: Unconventional myosin-Vb (1846 aa).

The 53-residue stretch at 8-60 (SRYTRVWIPDPDEVWRSAELTKDYKDGDESLQLRLEDDTILDYPIDVQNNQVP) folds into the Myosin N-terminal SH3-like domain. Residues 21–40 (VWRSAELTKDYKDGDESLQL) form a requires for interaction with LIMA1 region. Residues 69–763 (VGENDLTALS…QVAYLEKLRA (695 aa)) enclose the Myosin motor domain. ATP is bound at residue 163–170 (GESGAGKT). Positions 599-629 (VPATNTAKSRSSSKINVRSSRPLMKAPNKEH) are disordered. Residues 607–619 (SRSSSKINVRSSR) are compositionally biased toward low complexity. The interval 641-663 (LNLLMETLNATTPHYVRCIKPND) is actin-binding. IQ domains are found at residues 767-788 (REAT…KYRR), 789-813 (LRAA…EHLR), 814-837 (RTRA…YCRV), 838-861 (RRAA…PPVL), 862-884 (TEHK…HFQR), and 885-914 (QRDA…EARS). Coiled-coil stretches lie at residues 915-1272 (AEHL…ADQR) and 1334-1450 (LKQV…RHHE). The tract at residues 1088–1122 (RDEQQTPGHRKNPSNQSSLESDSNYPSISTSEIGD) is disordered. The span at 1100–1120 (PSNQSSLESDSNYPSISTSEI) shows a compositional bias: polar residues. Serine 1444 is modified (phosphoserine). The 278-residue stretch at 1524–1801 (SSTINGIKKV…IRTIQAQLQE (278 aa)) folds into the Dilute domain.

The protein belongs to the TRAFAC class myosin-kinesin ATPase superfamily. Myosin family. Component of the CART complex, at least composed of ACTN4, HGS/HRS, MYO5B and TRIM3. Interacts with RAB11FIP2. Interacts with RAB11A and RAB8A. Found in a complex with CFTR and RAB11A. Interacts with NPC1L1. Interacts with LIMA1.

It localises to the cytoplasm. Its function is as follows. May be involved in vesicular trafficking via its association with the CART complex. The CART complex is necessary for efficient transferrin receptor recycling but not for EGFR degradation. Required in a complex with RAB11A and RAB11FIP2 for the transport of NPC1L1 to the plasma membrane. Together with RAB11A participates in CFTR trafficking to the plasma membrane and TF (transferrin) recycling in nonpolarized cells. Together with RAB11A and RAB8A participates in epithelial cell polarization. Together with RAB25 regulates transcytosis. Required for proper localization of bile salt export pump ABCB11 at the apical/canalicular plasma membrane of hepatocytes. This is Unconventional myosin-Vb (Myo5b) from Rattus norvegicus (Rat).